The primary structure comprises 764 residues: MAATSTAAVDQLAADLGNTSLDNKAAAPAPIDTSAVPEAQAEGAEAAPTPTAAPHPQASASLYVGELDPSVTEAMLFELFSQIGSVASIRVCRDAVTRRSLGYAYVNYNTTADGEKALEELNYTLIKGRPCRIMWSQRDPALRKTGAGNIFIKNLDAAIDNKALHDTFAAFGNILSCKVAQDEHGNSKGYGFVHYETDEAASQAIKHVNGMLLNEKKVYVGHHIPKKDRQSKFEEMKANFTNVYVKNINNEVTDEEFRELFAKFGEVTSSSLARDQEGKSRGFGFVNFTTHEAAAQAVDELNGKDFRGQDLYVGRAQKKHEREEELRKSYEAARLEKANKYQGVNLYIKNLGDDVDDDKLRAMFSEYGPITSAKVMRDSLIEGSEEKDEKDKENKKEGETKEEEQNEGSEKKTEKKGDRKLGKSKGFGFVCFSNPDDATKAVTEMNQRMVDGKPLYVALAQRKDVRKSQLEASIQARNQLRMQQAAAQAGMPQQYMQAPVYYAGQQPGFMPAPGGRGVPFPQGGIVPGVQGGRPGQYPYQQGGRGGVPPQQMPPMGYPINQFGPGAFPPNTPQYMAAMGQVGALGGGRGGPAGRGPQGIPAGIPQGLQGGPAVPGYPPAGRPQNGGGRGTPRGNANFMAAGRGASPIPGAPADLSAGSFLQAQLATTQDPQAQKQIIGENLFPKIQAIQPALAGKITGMLLEMDNAELINLFEDDNALNVKVQEALAVYDEYLKTQGQQPTQQPAEANGEQPKAEEQKPEEQKA.

The interval 36-56 (VPEAQAEGAEAAPTPTAAPHP) is disordered. 4 RRM domains span residues 60 to 138 (ASLY…WSQR), 148 to 225 (GNIF…HHIP), 241 to 318 (TNVY…RAQK), and 344 to 462 (VNLY…LAQR). 2 disordered regions span residues 375-420 (VMRD…GDRK) and 587-634 (GRGG…PRGN). 2 stretches are compositionally biased toward basic and acidic residues: residues 387-399 (KDEK…KEGE) and 408-420 (GSEK…GDRK). Gly residues predominate over residues 587–596 (GRGGPAGRGP). Residues 597–613 (QGIPAGIPQGLQGGPAV) are compositionally biased toward low complexity. Residues 657-734 (GSFLQAQLAT…ALAVYDEYLK (78 aa)) enclose the PABC domain. A compositionally biased stretch (polar residues) spans 735 to 745 (TQGQQPTQQPA). A disordered region spans residues 735–764 (TQGQQPTQQPAEANGEQPKAEEQKPEEQKA). Residues 752 to 764 (PKAEEQKPEEQKA) show a composition bias toward basic and acidic residues.

This sequence belongs to the polyadenylate-binding protein type-1 family.

It is found in the cytoplasm. It localises to the nucleus. Binds the poly(A) tail of mRNA. Appears to be an important mediator of the multiple roles of the poly(A) tail in mRNA biogenesis, stability and translation. In the nucleus, involved in both mRNA cleavage and polyadenylation. Is also required for efficient mRNA export to the cytoplasm. Acts in concert with a poly(A)-specific nuclease (PAN) to affect poly(A) tail shortening, which may occur concomitantly with either nucleocytoplasmic mRNA transport or translational initiation. In the cytoplasm, stimulates translation initiation and regulates mRNA decay through translation termination-coupled poly(A) shortening, probably mediated by PAN. The protein is Polyadenylate-binding protein, cytoplasmic and nuclear (pabp-1) of Neurospora crassa (strain ATCC 24698 / 74-OR23-1A / CBS 708.71 / DSM 1257 / FGSC 987).